A 267-amino-acid polypeptide reads, in one-letter code: PF03932 family protein CutC (267 aa).

Belongs to the CutC family.

The protein resides in the cytoplasm. The protein is PF03932 family protein CutC of Xylella fastidiosa (strain Temecula1 / ATCC 700964).